The following is a 1072-amino-acid chain: DNA-directed RNA polymerase subunit beta (1072 aa).

It belongs to the RNA polymerase beta chain family. As to quaternary structure, in plastids the minimal PEP RNA polymerase catalytic core is composed of four subunits: alpha, beta, beta', and beta''. When a (nuclear-encoded) sigma factor is associated with the core the holoenzyme is formed, which can initiate transcription.

The protein resides in the plastid. Its subcellular location is the chloroplast. It carries out the reaction RNA(n) + a ribonucleoside 5'-triphosphate = RNA(n+1) + diphosphate. Functionally, DNA-dependent RNA polymerase catalyzes the transcription of DNA into RNA using the four ribonucleoside triphosphates as substrates. In Lepidium virginicum (Virginia pepperweed), this protein is DNA-directed RNA polymerase subunit beta.